The primary structure comprises 302 residues: tRNA dimethylallyltransferase (302 aa).

8–15 serves as a coordination point for ATP; it reads GSSGSGKS. Residue 10 to 15 participates in substrate binding; sequence SGSGKS. An interaction with substrate tRNA region spans residues 33-36; the sequence is DSLS.

This sequence belongs to the IPP transferase family. In terms of assembly, monomer. Requires Mg(2+) as cofactor.

It catalyses the reaction adenosine(37) in tRNA + dimethylallyl diphosphate = N(6)-dimethylallyladenosine(37) in tRNA + diphosphate. Its function is as follows. Catalyzes the transfer of a dimethylallyl group onto the adenine at position 37 in tRNAs that read codons beginning with uridine, leading to the formation of N6-(dimethylallyl)adenosine (i(6)A). The chain is tRNA dimethylallyltransferase from Helicobacter hepaticus (strain ATCC 51449 / 3B1).